The following is a 434-amino-acid chain: MDAKASNKTATLTVGNKNYDLPIHSGSVGPDVIDIGKLYGQSGLFTYDPGFTSTASCQSKITYIDGDAGVLEYRGYPIEQLAENGDFLETCYLLLYGNLPTAAQKKDFDDRVIHHTMVHEQMARFFQGFRRDAHPMAVMVASVGALAAFYHDSTDINDPKQRMIASMRMIAKIPTLAAMAYKYTIGQPFVYPKNSLKFAENFLHMCFAVPCEEYKINPVLADALDKIFILHADHEQNASTSTVRIAGSSGANPFACIAAGIACLWGPAHGGANEAALAMLAEIGSVDKIPEFIAKVKDKNSEVRLMGFGHRVYKNYDPRAKIMQKMCHAVLKETGHGDDPMLKVAMELEKIALSDQYFIDRKLYPNVDFYSGITLKAMGFPVSMFTVLFAVARTVGWISQWSEMIEDPQQKIGRPRQLYTGVTRRDYVAIKDRK.

Active-site residues include His310 and Asp368.

It belongs to the citrate synthase family.

It carries out the reaction oxaloacetate + acetyl-CoA + H2O = citrate + CoA + H(+). It functions in the pathway carbohydrate metabolism; tricarboxylic acid cycle; isocitrate from oxaloacetate: step 1/2. The protein is Citrate synthase (gltA) of Bradyrhizobium diazoefficiens (strain JCM 10833 / BCRC 13528 / IAM 13628 / NBRC 14792 / USDA 110).